The following is a 77-amino-acid chain: MAFLKKSLFLVLFLGLVPLFLCENEKREGENEKEENDDQSEEKRSLGSFMKGVGKGLATVGKIVADQFGKLLEAGKG.

The first 22 residues, 1 to 22 (MAFLKKSLFLVLFLGLVPLFLC), serve as a signal peptide directing secretion. A propeptide spanning residues 23-42 (ENEKREGENEKEENDDQSEE) is cleaved from the precursor. A Lysine amide modification is found at Lys-76.

This sequence belongs to the frog skin active peptide (FSAP) family. Dermatoxin subfamily. Expressed by the skin glands.

Its subcellular location is the secreted. Possesses a potent antimicrobial activity against Gram-positive and Gram-negative bacteria. Probably acts by disturbing membrane functions with its amphipathic structure. In Agalychnis dacnicolor (Giant Mexican leaf frog), this protein is Dermatoxin-DA1.